The sequence spans 139 residues: D-ribose pyranase (139 aa).

His20 serves as the catalytic Proton donor. Substrate-binding positions include Asp28, His106, and Tyr128 to Asn130.

The protein belongs to the RbsD / FucU family. RbsD subfamily. Homodecamer.

The protein resides in the cytoplasm. The enzyme catalyses beta-D-ribopyranose = beta-D-ribofuranose. It participates in carbohydrate metabolism; D-ribose degradation; D-ribose 5-phosphate from beta-D-ribopyranose: step 1/2. In terms of biological role, catalyzes the interconversion of beta-pyran and beta-furan forms of D-ribose. This Vibrio vulnificus (strain CMCP6) protein is D-ribose pyranase.